The chain runs to 448 residues: ATP-dependent protease ATPase subunit HslU (448 aa).

Residues Ile-18, 60–65 (GVGKTE), Asp-261, Glu-326, and Arg-398 contribute to the ATP site.

This sequence belongs to the ClpX chaperone family. HslU subfamily. A double ring-shaped homohexamer of HslV is capped on each side by a ring-shaped HslU homohexamer. The assembly of the HslU/HslV complex is dependent on binding of ATP.

Its subcellular location is the cytoplasm. In terms of biological role, ATPase subunit of a proteasome-like degradation complex; this subunit has chaperone activity. The binding of ATP and its subsequent hydrolysis by HslU are essential for unfolding of protein substrates subsequently hydrolyzed by HslV. HslU recognizes the N-terminal part of its protein substrates and unfolds these before they are guided to HslV for hydrolysis. The chain is ATP-dependent protease ATPase subunit HslU from Paraburkholderia phytofirmans (strain DSM 17436 / LMG 22146 / PsJN) (Burkholderia phytofirmans).